Consider the following 759-residue polypeptide: Protein YdeP (759 aa).

2 residues coordinate [4Fe-4S] cluster: Cys49 and Cys52.

The protein belongs to the prokaryotic molybdopterin-containing oxidoreductase family. It depends on [4Fe-4S] cluster as a cofactor. The cofactor is Mo-bis(molybdopterin guanine dinucleotide).

Probably involved in acid resistance. This chain is Protein YdeP (ydeP), found in Escherichia coli (strain K12).